The sequence spans 815 residues: Probable bifunctional folylpolyglutamate synthase/dihydropteroate synthase (815 aa).

The tract at residues 1–416 (MRYDEAANFL…LVAGSLFAVA (416 aa)) is folylpolyglutamate synthase. 47 to 53 (GSNGKGS) lines the ATP pocket. The region spanning 553–803 (TAVMGILNVT…DVPENVAAVR (251 aa)) is the Pterin-binding domain. A DHPS region spans residues 555-815 (VMGILNVTPD…EATRTGADAE (261 aa)). Residue N560 coordinates Mg(2+). (7,8-dihydropterin-6-yl)methyl diphosphate is bound by residues T600, D633, N652, D722, K758, and 791 to 793 (RVH).

In the N-terminal section; belongs to the folylpolyglutamate synthase family. This sequence in the C-terminal section; belongs to the DHPS family. Mg(2+) is required as a cofactor.

The catalysed reaction is (6S)-5,6,7,8-tetrahydrofolyl-(gamma-L-Glu)(n) + L-glutamate + ATP = (6S)-5,6,7,8-tetrahydrofolyl-(gamma-L-Glu)(n+1) + ADP + phosphate + H(+). It carries out the reaction (7,8-dihydropterin-6-yl)methyl diphosphate + 4-aminobenzoate = 7,8-dihydropteroate + diphosphate. The protein operates within cofactor biosynthesis; tetrahydrofolylpolyglutamate biosynthesis. It participates in cofactor biosynthesis; tetrahydrofolate biosynthesis; 7,8-dihydrofolate from 2-amino-4-hydroxy-6-hydroxymethyl-7,8-dihydropteridine diphosphate and 4-aminobenzoate: step 1/2. In terms of biological role, can complement an H.volcanii mutant strain that is thymidine auxotroph because it lacks the two dihydrofolate reductase genes encoded by hdrA and hdrB. The chain is Probable bifunctional folylpolyglutamate synthase/dihydropteroate synthase (folP) from Halobacterium salinarum (strain ATCC 700922 / JCM 11081 / NRC-1) (Halobacterium halobium).